Consider the following 345-residue polypeptide: GTPase Obg (345 aa).

Positions 1-159 constitute an Obg domain; the sequence is MHFLDQAKIF…MWVWLRLKLL (159 aa). Positions 121-142 are disordered; it reads GDGGRGNASYKTSTNRAPRQHG. Residues 160–327 form the OBG-type G domain; that stretch reads ADCGLVGLPN…VLDKIIEILG (168 aa). Residues 166-173, 191-195, 212-215, 279-282, and 308-310 contribute to the GTP site; these read GLPNAGKS, FTTIR, DIPG, NKID, and SGA. Ser-173 and Thr-193 together coordinate Mg(2+).

This sequence belongs to the TRAFAC class OBG-HflX-like GTPase superfamily. OBG GTPase family. Monomer. Mg(2+) is required as a cofactor.

The protein localises to the cytoplasm. In terms of biological role, an essential GTPase which binds GTP, GDP and possibly (p)ppGpp with moderate affinity, with high nucleotide exchange rates and a fairly low GTP hydrolysis rate. Plays a role in control of the cell cycle, stress response, ribosome biogenesis and in those bacteria that undergo differentiation, in morphogenesis control. The sequence is that of GTPase Obg from Rhizorhabdus wittichii (strain DSM 6014 / CCUG 31198 / JCM 15750 / NBRC 105917 / EY 4224 / RW1) (Sphingomonas wittichii).